Here is a 192-residue protein sequence, read N- to C-terminus: I-Kappa-B like protein H1 (192 aa).

3 ANK repeats span residues 94–126 (KGAQ…DING), 131–161 (AGLT…DVKV), and 165–192 (GKET…SKKM).

This sequence belongs to the polydnaviridae I-Kappa-B-like protein family.

In terms of biological role, suppresses the host immune response through NF-kappa-B inactivation. Possesses ankyrin repeat domains required for NF-kappa-B binding but lacks the regulatory regions required for dissociation from NF-kappa-B and degradation. Therefore, prevents host NF-kappa-B release and subsequent activation. The chain is I-Kappa-B like protein H1 (H4) from Microplitis demolitor bracovirus (isolate Webb) (MdBV).